The chain runs to 120 residues: Large ribosomal subunit protein bL19c (120 aa).

It belongs to the bacterial ribosomal protein bL19 family.

The protein localises to the plastid. It localises to the chloroplast. This is Large ribosomal subunit protein bL19c from Phaeodactylum tricornutum (strain CCAP 1055/1).